The sequence spans 298 residues: Syntaxin-4 (298 aa).

Over 1 to 274 (MRDRTHELRQ…NQKKARKKKV (274 aa)) the chain is Cytoplasmic. Residues serine 15, serine 29, serine 35, serine 36, serine 117, serine 208, and serine 248 each carry the phosphoserine modification. Residues 38–163 (DDEFFQKVQT…ERIRRQLKIT (126 aa)) adopt a coiled-coil conformation. The interval 154 to 298 (ERIRRQLKIT…VIIGITITVG (145 aa)) is interaction with CENPF. The 63-residue stretch at 200 to 262 (LNEISARHSE…ERGQEHVKIA (63 aa)) folds into the t-SNARE coiled-coil homology domain. The chain crosses the membrane as a helical; Anchor for type IV membrane protein span at residues 275–295 (MIAICVSVTVLILAVIIGITI). Topologically, residues 296-298 (TVG) are extracellular.

It belongs to the syntaxin family. As to quaternary structure, found in a complex with VAMP8 and SNAP23. Detected in a complex with SNAP23 and STXBP4. Interacts with SNAP23 and SNAPIN. Interacts with VAMP2. Interacts with LLGL1. Interacts (via C-terminus) with CENPF. Interacts with DOC2B. Interacts with STXBP3; excludes interaction with DOC2B and SNAP25. Interacts with STXBP4; excludes interaction with VAMP2. Component of the SNARE complex composed of STX4, SNAP23 and VAMP7 that interacts with SYT7 during lysosomal exocytosis. Interacts with STXBP6. Interacts with STXBP5L. In terms of tissue distribution, expressed in all tissues tested including adipose, brain, testis, intestine, liver, heart, spleen, skeletal muscle and kidney.

It is found in the cell membrane. The protein resides in the cell projection. The protein localises to the neuron projection. It localises to the stereocilium. Functionally, plasma membrane t-SNARE that mediates docking of transport vesicles. Necessary for the translocation of SLC2A4 from intracellular vesicles to the plasma membrane. In neurons, recruited at neurite tips to membrane domains rich in the phospholipid 1-oleoyl-2-palmitoyl-PC (OPPC) which promotes neurite tip surface expression of the dopamine transporter SLC6A3/DAT by facilitating fusion of SLC6A3-containing transport vesicles with the plasma membrane. Together with STXB3 and VAMP2, may also play a role in docking/fusion of intracellular GLUT4-containing vesicles with the cell surface in adipocytes and in docking of synaptic vesicles at presynaptic active zones. Required for normal hearing. The polypeptide is Syntaxin-4 (Stx4) (Rattus norvegicus (Rat)).